Reading from the N-terminus, the 402-residue chain is Phosphoglycerate kinase (402 aa).

Residues 21–23 (DFN), Arg-36, 59–62 (HLGR), Arg-118, and Arg-151 contribute to the substrate site. ATP contacts are provided by residues Lys-201, Gly-293, Glu-324, and 353 to 356 (GGDS).

The protein belongs to the phosphoglycerate kinase family. As to quaternary structure, monomer.

The protein resides in the cytoplasm. The catalysed reaction is (2R)-3-phosphoglycerate + ATP = (2R)-3-phospho-glyceroyl phosphate + ADP. Its pathway is carbohydrate degradation; glycolysis; pyruvate from D-glyceraldehyde 3-phosphate: step 2/5. This Thermosipho africanus (strain TCF52B) protein is Phosphoglycerate kinase.